We begin with the raw amino-acid sequence, 916 residues long: Major intrinsically disordered Notch2-binding receptor 1 (916 aa).

Residues 1-891 lie on the Cytoplasmic side of the membrane; it reads METSQETSLF…AEFRRAKVCK (891 aa). Disordered stretches follow at residues 390–409, 553–591, 648–675, 705–726, and 745–782; these read EEKLHYPNASSQTPNFPAPE, KSDCDSSPEHNLTKIANGVPNSKGDKGNRPENTHHSEEE, SLTSEGPSDDSASPRMFHAHSGSHGPKL, TRPSSRSLTEENSATESKIASI, and NEEEIKDTGPGDNKDWHRKSKEADRQYDIPPQHRLPKQ. Basic and acidic residues-rich tracts occupy residues 553 to 564 and 575 to 591; these read KSDCDSSPEHNL and KGDKGNRPENTHHSEEE. Ser711 is modified (phosphoserine). Residues 750-771 are compositionally biased toward basic and acidic residues; it reads KDTGPGDNKDWHRKSKEADRQY. Residues 892–912 form a helical membrane-spanning segment; it reads IAALIAAAACTVILVIVVPIC. Residues 913–916 lie on the Extracellular side of the membrane; that stretch reads TMKS.

It belongs to the MINAR family. As to quaternary structure, interacts with NOTCH2; this interaction increases MINAR1 stability. Interacts (via N-terminus) with DEPTOR (via PDZ domain); this interaction may stabilize DEPTOR protein by impairing its ubiquitination. As to expression, widely expressed, including in breast epithelial cells and endothelial cells (at protein level). Expression is down-regulated in advanced breast tumors (at protein level).

It localises to the cell membrane. Its function is as follows. Intrinsically disordered protein which may negatively regulate mTOR signaling pathway by stabilizing the mTOR complex component DEPTOR. Negatively regulates angiogenesis. Negatively regulates cell growth. Negatively regulates neurite outgrowth in hippocampal neurons. The protein is Major intrinsically disordered Notch2-binding receptor 1 of Homo sapiens (Human).